We begin with the raw amino-acid sequence, 395 residues long: Ketol-acid reductoisomerase, mitochondrial (395 aa).

The transit peptide at 1 to 47 (MLRTQAARLICNSRVITAKRTFALATRAAAYSRPAARFVKPMITTRG) directs the protein to the mitochondrion. Positions 57 to 246 (VETVYERADW…AIGSGYVYQT (190 aa)) constitute a KARI N-terminal Rossmann domain. NADP(+) is bound by residues 84-93 (GYGSQGYGQG), 108-113 (RKDGAS), and 146-150 (SDAAQ). The active site involves H171. The KARI C-terminal knotted domain occupies 247–394 (TFEREVNSDL…KEVRKLRPEN (148 aa)). Residues D255, E259, E291, and E295 each coordinate Mg(2+). S317 serves as a coordination point for substrate. At S355 the chain carries Phosphoserine. Positions 363–395 (DYREKLEKELDTIRNMEIWKVGKEVRKLRPENQ) are hydrophilic.

Belongs to the ketol-acid reductoisomerase family. Mg(2+) is required as a cofactor.

It localises to the mitochondrion. It catalyses the reaction (2R)-2,3-dihydroxy-3-methylbutanoate + NADP(+) = (2S)-2-acetolactate + NADPH + H(+). The catalysed reaction is (2R,3R)-2,3-dihydroxy-3-methylpentanoate + NADP(+) = (S)-2-ethyl-2-hydroxy-3-oxobutanoate + NADPH + H(+). It participates in amino-acid biosynthesis; L-isoleucine biosynthesis; L-isoleucine from 2-oxobutanoate: step 2/4. It functions in the pathway amino-acid biosynthesis; L-valine biosynthesis; L-valine from pyruvate: step 2/4. Involved in the biosynthesis of branched-chain amino acids (BCAA). Catalyzes the second common step in the parallel biosynthesis of isoleucine and valine. Converts alpha-aceto-alpha-hydroxybutyrate (AHB) to alpha,beta-dihydroxy-beta-methylvalerate (DHMV) and alpha-acetolactate (AL) to alpha,beta-dihydroxy-isovalerate (DHV) in isoleucine and valine biosynthesis, respectively. The protein is Ketol-acid reductoisomerase, mitochondrial of Saccharomyces cerevisiae (strain ATCC 204508 / S288c) (Baker's yeast).